A 359-amino-acid chain; its full sequence is Membrane-bound lytic murein transglycosylase C (359 aa).

Positions 1 to 16 (MKKVLALALIAPLLIS) are cleaved as a signal peptide. Residue cysteine 17 is the site of N-palmitoyl cysteine attachment. A lipid anchor (S-diacylglycerol cysteine) is attached at cysteine 17.

Belongs to the transglycosylase Slt family.

The protein localises to the cell outer membrane. It carries out the reaction Exolytic cleavage of the (1-&gt;4)-beta-glycosidic linkage between N-acetylmuramic acid (MurNAc) and N-acetylglucosamine (GlcNAc) residues in peptidoglycan, from either the reducing or the non-reducing ends of the peptidoglycan chains, with concomitant formation of a 1,6-anhydrobond in the MurNAc residue.. Functionally, murein-degrading enzyme. May play a role in recycling of muropeptides during cell elongation and/or cell division. This chain is Membrane-bound lytic murein transglycosylase C, found in Edwardsiella ictaluri (strain 93-146).